The following is a 400-amino-acid chain: Double C2-like domain-containing protein alpha (400 aa).

Residues 1 to 89 are interaction with UNC13D and DYNLT1; that stretch reads MRGRRGDRMT…DSYDSDDATA (89 aa). C2 domains lie at 89-211 and 251-384; these read ALGT…HFNI and ERGR…ERWH. Ca(2+) contacts are provided by Asp-120, Asp-126, Asp-181, Asp-183, Asp-282, Asp-288, Asp-342, Asp-344, and Asp-350. An interaction with UNC13D region spans residues 215–400; the sequence is RQVPLASPSS…PPAAGALSSA (186 aa).

As to quaternary structure, interacts (via N-terminus) with UNC13A. Interacts with cytoplasmic dynein light chain DYNLT1. Interacts with UNC13D. Ca(2+) is required as a cofactor. In terms of tissue distribution, predominantly expressed in brain. Also expressed in testis.

It localises to the lysosome. Its subcellular location is the cytoplasmic vesicle. The protein resides in the secretory vesicle. The protein localises to the synaptic vesicle membrane. It is found in the synapse. It localises to the synaptosome. Its function is as follows. Calcium sensor which most probably regulates fusion of vesicles with membranes. Binds calcium and phospholipids. May be involved in calcium dependent neurotransmitter release through the interaction with UNC13A. May be involved in calcium-dependent spontaneous release of neurotransmitter in absence of action potentials in neuronal cells. Regulates Ca(2+)-dependent secretory lysosome exocytosis in mast cells. This is Double C2-like domain-containing protein alpha (DOC2A) from Homo sapiens (Human).